The primary structure comprises 147 residues: D-aminoacyl-tRNA deacylase (147 aa).

Residues 137–138 (GP) carry the Gly-cisPro motif, important for rejection of L-amino acids motif.

The protein belongs to the DTD family. Homodimer.

It localises to the cytoplasm. The enzyme catalyses glycyl-tRNA(Ala) + H2O = tRNA(Ala) + glycine + H(+). It carries out the reaction a D-aminoacyl-tRNA + H2O = a tRNA + a D-alpha-amino acid + H(+). Its function is as follows. An aminoacyl-tRNA editing enzyme that deacylates mischarged D-aminoacyl-tRNAs. Also deacylates mischarged glycyl-tRNA(Ala), protecting cells against glycine mischarging by AlaRS. Acts via tRNA-based rather than protein-based catalysis; rejects L-amino acids rather than detecting D-amino acids in the active site. By recycling D-aminoacyl-tRNA to D-amino acids and free tRNA molecules, this enzyme counteracts the toxicity associated with the formation of D-aminoacyl-tRNA entities in vivo and helps enforce protein L-homochirality. This Exiguobacterium sp. (strain ATCC BAA-1283 / AT1b) protein is D-aminoacyl-tRNA deacylase.